The chain runs to 757 residues: Cartilage oligomeric matrix protein (757 aa).

A signal peptide spans 1–20 (MVPDTACVLLLTLAALGASG). The COMP N-terminal stretch occupies residues 22–86 (GQSPLGSDLG…SVRTGLPSVR (65 aa)). The EGF-like 1 domain maps to 87–126 (PLLHCAPGFCFPGVACIQTESGARCGPCPAGFTGNGSHCT). 21 cysteine pairs are disulfide-bonded: Cys-91/Cys-102, Cys-96/Cys-111, Cys-114/Cys-125, Cys-131/Cys-142, Cys-136/Cys-151, Cys-154/Cys-178, Cys-184/Cys-197, Cys-191/Cys-206, Cys-209/Cys-221, Cys-229/Cys-243, Cys-237/Cys-253, Cys-255/Cys-266, Cys-282/Cys-287, Cys-292/Cys-312, Cys-328/Cys-348, Cys-351/Cys-371, Cys-387/Cys-407, Cys-410/Cys-430, Cys-448/Cys-468, Cys-484/Cys-504, and Cys-520/Cys-741. Asn-121 carries N-linked (GlcNAc...) asparagine glycosylation. The EGF-like 2; calcium-binding domain occupies 127–179 (DVNECNAHPCFPRVRCINTSPGFRCEACPPGYSGPTHQGVGLAFAKANKQVCT). The EGF-like 3; calcium-binding domain occupies 180–222 (DINECETGQHNCVPNSVCINTRGSFQCGPCQPGFVGDQASGCQ). In terms of domain architecture, EGF-like 4 spans 225 to 267 (AQRFCPDGSPSECHEHADCVLERDGSRSCVCAVGWAGNGILCG). TSP type-3 repeat units follow at residues 268–300 (RDTDLDGFPDEKLRCPERQCRKDNCVTVPNSGQ), 301–336 (EDVDRDGIGDACDPDADGDGVPNEKDNCPLVRNPDQ), 337–359 (RNTDEDKWGDACDNCRSQKNDDQ), 360–395 (KDTDQDGRGDACDDDIDGDRIRNQADNCPRVPNSDQ), 396–418 (KDSDGDGIGDACDNCPQKSNPDQ), 419–456 (ADVDHDFVGDACDSDQDQDGDGHQDSRDNCPTVPNSAQ), 457–492 (EDSDHDGQGDACDDDDDNDGVPDSRDNCRLVPNPGQ), and 493–528 (EDADRDGVGDVCQDDFDADKVVDKIDVCPENAEVTL). The segment at 298–503 (SGQEDVDRDG…DADRDGVGDV (206 aa)) is disordered. Basic and acidic residues-rich tracts occupy residues 334–346 (PDQRNTDEDKWGD) and 352–370 (RSQKNDDQKDTDQDGRGDA). The short motif at 367–369 (RGD) is the Cell attachment site element. Residues 467–476 (ACDDDDDNDG) are compositionally biased toward acidic residues. The mediates cell survival and induction of the IAP family of survival proteins stretch occupies residues 527-757 (TLTDFRAFQT…DYETHQLRQA (231 aa)). The 215-residue stretch at 532–746 (RAFQTVVLDP…LRYRCNDTIP (215 aa)) folds into the TSP C-terminal domain. Residue Asn-742 is glycosylated (N-linked (GlcNAc...) asparagine).

The protein belongs to the thrombospondin family. As to quaternary structure, pentamer; disulfide-linked. Exists in a more compact conformation in the presence of calcium and shows a more extended conformation in the absence of calcium. Interacts with ITGB3, ITGA5 and FN1. Binding to FN1 requires the presence of divalent cations (Ca(2+), Mg(2+) or Mn(2+)). The greatest amount of binding is seen in the presence of Mn(2+). Interacts with MATN1, MATN3, MATN4 and ACAN. Binds heparin, heparan sulfate and chondroitin sulfate. EDTA dimishes significantly its binding to ACAN and abolishes its binding to MATN3, MATN4 and chondroitin sulfate. Interacts with collagen I, II and IX, and interaction with these collagens is dependent on the presence of zinc ions. Interacts with ADAMTS12. Interacts with ITGA7. Ca(2+) serves as cofactor. Post-translationally, proteolytically cleaved by metalloproteases ADAMTS4 and ADAMTS1 with ADAMTS4 showing more potent activity. In terms of tissue distribution, abundantly expressed in the chondrocyte extracellular matrix, and is also found in bone, tendon, ligament and synovium and blood vessels. Increased amounts are produced during late stages of osteoarthritis in the area adjacent to the main defect.

Its subcellular location is the secreted. It is found in the extracellular space. It localises to the extracellular matrix. Functionally, plays a role in the structural integrity of cartilage via its interaction with other extracellular matrix proteins such as the collagens and fibronectin. Can mediate the interaction of chondrocytes with the cartilage extracellular matrix through interaction with cell surface integrin receptors. Could play a role in the pathogenesis of osteoarthritis. Potent suppressor of apoptosis in both primary chondrocytes and transformed cells. Suppresses apoptosis by blocking the activation of caspase-3 and by inducing the IAP family of survival proteins (BIRC3, BIRC2, BIRC5 and XIAP). Essential for maintaining a vascular smooth muscle cells (VSMCs) contractile/differentiated phenotype under physiological and pathological stimuli. Maintains this phenotype of VSMCs by interacting with ITGA7. The sequence is that of Cartilage oligomeric matrix protein from Homo sapiens (Human).